Reading from the N-terminus, the 136-residue chain is Protein BUNDLE SHEATH DEFECTIVE 2, chloroplastic (136 aa).

The N-terminal 56 residues, 1 to 56 (MANSLCFFSSPPTFCFQSPSKNPKPSHFFSTNDNTSSLVQKRELLQTSRSQSFEVK), are a transit peptide targeting the chloroplast. Residues 62-133 (PQGTKPNSLV…AGFIGGFLST (72 aa)) form a CR-type zinc finger. The Zn(2+) site is built by Cys72, Cys75, Glu78, Cys80, Cys83, Cys86, Cys107, Cys110, Glu115, Cys118, and Cys121.

The protein belongs to the BSD2 chaperone family. As to quaternary structure, interacts with the RuBisCo large subunit (RbcL) assembled as an intermediate complex made of eight RbcL and eight BSD2 subunits.

It is found in the plastid. The protein localises to the chloroplast stroma. Its function is as follows. Chloroplast chaperone required for RuBisCo biogenesis and translational regulation of the RuBisCo large subunit (RbcL). Stabilizes an end-state assembly intermediate of eight RbcL subunits until the small subunits (RBCSs) become available to produce a complete stable RuBisCo complex containing eight small and eight large subunits. In Arabidopsis thaliana (Mouse-ear cress), this protein is Protein BUNDLE SHEATH DEFECTIVE 2, chloroplastic.